A 161-amino-acid polypeptide reads, in one-letter code: Dihydrofolate reductase (161 aa).

A DHFR domain is found at 1 to 160; sequence MTMVGLIWAQ…LRYRLYSYHR (160 aa). 7–9 is a substrate binding site; that stretch reads IWA. NADP(+) is bound by residues 8-9 and 16-21; these read WA and IGRGGD. Residues Asp-29 and Arg-34 each contribute to the substrate site. Residue 45-48 participates in NADP(+) binding; that stretch reads GRRT. Arg-62 is a binding site for substrate. Residues 67 to 70, Gly-82, and 96 to 101 each bind NADP(+); these read LSRQ and IGGGQV. The substrate site is built by Tyr-102 and Thr-115.

This sequence belongs to the dihydrofolate reductase family.

The catalysed reaction is (6S)-5,6,7,8-tetrahydrofolate + NADP(+) = 7,8-dihydrofolate + NADPH + H(+). It functions in the pathway cofactor biosynthesis; tetrahydrofolate biosynthesis; 5,6,7,8-tetrahydrofolate from 7,8-dihydrofolate: step 1/1. Its function is as follows. Key enzyme in folate metabolism. Catalyzes an essential reaction for de novo glycine and purine synthesis, and for DNA precursor synthesis. The sequence is that of Dihydrofolate reductase (folA) from Mycobacterium tuberculosis (strain CDC 1551 / Oshkosh).